We begin with the raw amino-acid sequence, 181 residues long: Gastrokine-3 (181 aa).

A signal peptide spans 1 to 20; the sequence is MKHLVASSILGVFVLTPSLA. In terms of domain architecture, BRICHOS spans 53–145; the sequence is NNIFSEWDGI…MCRDDPTYFA (93 aa). Cys-80 and Cys-137 are disulfide-bonded.

This sequence belongs to the gastrokine family.

The protein resides in the secreted. Its function is as follows. May inhibit gastric epithelial cell proliferation. This is Gastrokine-3 (GKN3P) from Homo sapiens (Human).